A 378-amino-acid chain; its full sequence is Integrator complex assembly factor WDR73 (378 aa).

WD repeat units lie at residues 73 to 113, 121 to 163, 167 to 205, 214 to 255, 266 to 305, and 322 to 371; these read DFKV…VWQV, KAVS…VVDL, KTTY…LVDT, NRSP…LLDP, QCPV…VYDA, and EPLF…VWDW.

Belongs to the WD repeat WDR73 family. In terms of assembly, interacts with INTS9 and INTS11; the interaction is direct. Part of the multiprotein complex composed of BRAT1, WDR73, as well as integrator complex subunits INTS9 and INTS11. In terms of tissue distribution, expressed in kidney and brain. In the kidney, expressed in glomeruli, most probably in podocytes, and in tubules (at protein level). In the brain, expressed in the cerebellum, with high levels in Purkinje cells and their projecting axons, in the deep cerebellar nuclei and in pyramidal neurons of the cerebral cortex (at protein level). In the white matter, mainly present in astrocytes, but not in oligodendrocytes (at protein level). Also highly expressed in endothelial cells of cerebral capillaries (at protein level).

The protein localises to the cytoplasm. It localises to the cytoskeleton. The protein resides in the spindle. Its subcellular location is the spindle pole. It is found in the cleavage furrow. Component of a multiprotein complex required for the assembly of the RNA endonuclease module of the integrator complex. Associates with INTS9 and INTS11 in the cytoplasm, stabilizing the INTS9-INTS11 heterodimer and blocking the active site of INTS11. BRAT1 then joins the complex and plugs the active site of INTS11, leading to WDR73 release and nuclear import of INTS9 and INTS11. This chain is Integrator complex assembly factor WDR73, found in Homo sapiens (Human).